A 58-amino-acid polypeptide reads, in one-letter code: Large ribosomal subunit protein uL30 (58 aa).

It belongs to the universal ribosomal protein uL30 family. As to quaternary structure, part of the 50S ribosomal subunit.

In Pseudomonas savastanoi pv. phaseolicola (strain 1448A / Race 6) (Pseudomonas syringae pv. phaseolicola (strain 1448A / Race 6)), this protein is Large ribosomal subunit protein uL30.